The following is a 570-amino-acid chain: MSLHKHRSRMVTQGLTRTPHRAFLRATGFDDAALEKSMVGIVSTQGENTPCSMALGPQADRARLGVAAGGGVPVSFSTISISDGTSMNHAGMRMSLLSRETIADSVELVVRGHAYDALVAFAGCDKTLPAMMMAIVRLNVPAVFLYGGATLPGHAASGQVTILDTIEAVGRVQHGTMPAAELKAMERTCTPSAGSCPGQFTANTMAMVGEALGLSPLGSAMMPAVYSERLAIAQRAGEHVMRALAAGGPLPRQLVTRASLENACAAVAATGGSTNAALHIPAIAHEAGIAFTLDDVARVFKRTPLIADLQPGGRYLARDLHEAGGVPVVLKALLDGGHIDGSVLTLDGRTLAEALADTPAPDGKVVRACGQALHPTGGVAVLKGNLSPDGALLKIAGLKSLKFSGPARVFENEEACMRAVSTHAYQPGEVLVIRNEGPRGGPGMREMLSVTAALYGQGMGEKVALLTDGRFSGATRGLCIGYAGPEAAAGGPIALLRDGDMIHIDAEADTLDVALSDEELARRRAAYQAPPQARLAGALEKYAALVRPACLGAVTHSGQVDWPYETPEAE.

Residue cysteine 51 participates in [2Fe-2S] cluster binding. Aspartate 83 serves as a coordination point for Mg(2+). Cysteine 124 is a binding site for [2Fe-2S] cluster. The Mg(2+) site is built by aspartate 125 and lysine 126. Lysine 126 carries the post-translational modification N6-carboxylysine. [2Fe-2S] cluster is bound at residue cysteine 196. A Mg(2+)-binding site is contributed by glutamate 446. Serine 472 serves as the catalytic Proton acceptor.

It belongs to the IlvD/Edd family. As to quaternary structure, homodimer. [2Fe-2S] cluster serves as cofactor. Requires Mg(2+) as cofactor.

The enzyme catalyses (2R)-2,3-dihydroxy-3-methylbutanoate = 3-methyl-2-oxobutanoate + H2O. The catalysed reaction is (2R,3R)-2,3-dihydroxy-3-methylpentanoate = (S)-3-methyl-2-oxopentanoate + H2O. It functions in the pathway amino-acid biosynthesis; L-isoleucine biosynthesis; L-isoleucine from 2-oxobutanoate: step 3/4. It participates in amino-acid biosynthesis; L-valine biosynthesis; L-valine from pyruvate: step 3/4. Functions in the biosynthesis of branched-chain amino acids. Catalyzes the dehydration of (2R,3R)-2,3-dihydroxy-3-methylpentanoate (2,3-dihydroxy-3-methylvalerate) into 2-oxo-3-methylpentanoate (2-oxo-3-methylvalerate) and of (2R)-2,3-dihydroxy-3-methylbutanoate (2,3-dihydroxyisovalerate) into 2-oxo-3-methylbutanoate (2-oxoisovalerate), the penultimate precursor to L-isoleucine and L-valine, respectively. The protein is Dihydroxy-acid dehydratase 2 of Bordetella bronchiseptica (strain ATCC BAA-588 / NCTC 13252 / RB50) (Alcaligenes bronchisepticus).